The primary structure comprises 413 residues: Eukaryotic initiation factor 4A-8 (413 aa).

Positions 40 to 68 (DSFDAMGLQENLLRGIYAYGFEKPSAIQQ) match the Q motif motif. In terms of domain architecture, Helicase ATP-binding spans 71 to 241 (IVPFCKGLDV…RKFMNKPVRI (171 aa)). 84–91 (AQSGTGKT) is a binding site for ATP. The DEAD box motif lies at 189 to 192 (DEAD). In terms of domain architecture, Helicase C-terminal spans 252–413 (GIKQFYVNVD…ELPSNVADLL (162 aa)).

The protein belongs to the DEAD box helicase family. eIF4A subfamily. In terms of assembly, eIF4F is a multi-subunit complex, the composition of which varies with external and internal environmental conditions. It is composed of at least EIF4A, EIF4E and EIF4G. Pollen specific.

The enzyme catalyses ATP + H2O = ADP + phosphate + H(+). Its function is as follows. ATP-dependent RNA helicase which is a subunit of the eIF4F complex involved in cap recognition and is required for mRNA binding to ribosome. In the current model of translation initiation, eIF4A unwinds RNA secondary structures in the 5'-UTR of mRNAs which is necessary to allow efficient binding of the small ribosomal subunit, and subsequent scanning for the initiator codon. The chain is Eukaryotic initiation factor 4A-8 from Nicotiana tabacum (Common tobacco).